The primary structure comprises 308 residues: Methionyl-tRNA formyltransferase (308 aa).

110 to 113 (SLLP) contacts (6S)-5,6,7,8-tetrahydrofolate.

The protein belongs to the Fmt family.

It carries out the reaction L-methionyl-tRNA(fMet) + (6R)-10-formyltetrahydrofolate = N-formyl-L-methionyl-tRNA(fMet) + (6S)-5,6,7,8-tetrahydrofolate + H(+). Its function is as follows. Attaches a formyl group to the free amino group of methionyl-tRNA(fMet). The formyl group appears to play a dual role in the initiator identity of N-formylmethionyl-tRNA by promoting its recognition by IF2 and preventing the misappropriation of this tRNA by the elongation apparatus. In Mycobacterium sp. (strain KMS), this protein is Methionyl-tRNA formyltransferase.